The primary structure comprises 201 residues: Nuclear protein UL4 (201 aa).

The protein belongs to the alphaherpesvirinae HHV-1 UL4 family.

The protein resides in the host nucleus. The sequence is that of Nuclear protein UL4 from Human herpesvirus 2 (strain HG52) (HHV-2).